The sequence spans 198 residues: Putative glutathione S-transferase alpha-5 (198 aa).

Residues threonine 2–glycine 78 form the GST N-terminal domain. Glutathione-binding positions include tyrosine 8, arginine 42, glutamine 49–leucine 50, and glutamine 62–threonine 63. One can recognise a GST C-terminal domain in the interval threonine 80–phenylalanine 198.

Belongs to the GST superfamily. Alpha family.

The catalysed reaction is RX + glutathione = an S-substituted glutathione + a halide anion + H(+). In terms of biological role, conjugation of reduced glutathione to a wide number of exogenous and endogenous hydrophobic electrophiles. The protein is Putative glutathione S-transferase alpha-5 (gsta5) of Dictyostelium discoideum (Social amoeba).